The primary structure comprises 182 residues: Oligoribonuclease (182 aa).

The Exonuclease domain maps to 8-171 (LIWIDLEMTG…DDIRESIKEL (164 aa)). The active site involves tyrosine 129.

Belongs to the oligoribonuclease family.

The protein localises to the cytoplasm. 3'-to-5' exoribonuclease specific for small oligoribonucleotides. In Haemophilus influenzae (strain ATCC 51907 / DSM 11121 / KW20 / Rd), this protein is Oligoribonuclease (orn).